Here is a 142-residue protein sequence, read N- to C-terminus: Hemoglobin subunit alpha (142 aa).

The region spanning 2–142 is the Globin domain; it reads VLSGEDKSNI…VSTVLTSKYR (141 aa). Phosphoserine is present on S4. N6-succinyllysine is present on residues K8 and K12. Residue K17 is modified to N6-acetyllysine; alternate. N6-succinyllysine; alternate is present on K17. Y25 carries the phosphotyrosine modification. The residue at position 36 (S36) is a Phosphoserine. K41 is subject to N6-succinyllysine. S50 bears the Phosphoserine mark. H59 contacts O2. Heme b is bound at residue H88. At S103 the chain carries Phosphoserine. T109 carries the post-translational modification Phosphothreonine. Phosphoserine occurs at positions 112, 125, and 132. A phosphothreonine mark is found at T135 and T138. S139 is subject to Phosphoserine.

This sequence belongs to the globin family. Heterotetramer of two alpha chains and two beta chains. As to expression, red blood cells.

Its function is as follows. Involved in oxygen transport from the lung to the various peripheral tissues. In terms of biological role, hemopressin acts as an antagonist peptide of the cannabinoid receptor CNR1. Hemopressin-binding efficiently blocks cannabinoid receptor CNR1 and subsequent signaling. The chain is Hemoglobin subunit alpha (Hba) from Mus musculus (Mouse).